The following is a 231-amino-acid chain: Flagellar L-ring protein (231 aa).

Residues methionine 1–glycine 20 form the signal peptide. The N-palmitoyl cysteine moiety is linked to residue cysteine 21. Cysteine 21 carries the S-diacylglycerol cysteine lipid modification.

This sequence belongs to the FlgH family. In terms of assembly, the basal body constitutes a major portion of the flagellar organelle and consists of four rings (L,P,S, and M) mounted on a central rod.

It localises to the cell outer membrane. Its subcellular location is the bacterial flagellum basal body. Functionally, assembles around the rod to form the L-ring and probably protects the motor/basal body from shearing forces during rotation. The protein is Flagellar L-ring protein of Desulfotalea psychrophila (strain LSv54 / DSM 12343).